The following is a 433-amino-acid chain: 3-phosphoshikimate 1-carboxyvinyltransferase (433 aa).

3-phosphoshikimate contacts are provided by Lys-23, Ser-24, and Arg-28. Lys-23 lines the phosphoenolpyruvate pocket. 2 residues coordinate phosphoenolpyruvate: Gly-95 and Arg-123. 3-phosphoshikimate contacts are provided by Ser-167, Gln-169, Asp-317, and Lys-344. A phosphoenolpyruvate-binding site is contributed by Gln-169. Asp-317 functions as the Proton acceptor in the catalytic mechanism. Phosphoenolpyruvate is bound by residues Arg-348 and Arg-390.

This sequence belongs to the EPSP synthase family. In terms of assembly, monomer.

Its subcellular location is the cytoplasm. It catalyses the reaction 3-phosphoshikimate + phosphoenolpyruvate = 5-O-(1-carboxyvinyl)-3-phosphoshikimate + phosphate. Its pathway is metabolic intermediate biosynthesis; chorismate biosynthesis; chorismate from D-erythrose 4-phosphate and phosphoenolpyruvate: step 6/7. In terms of biological role, catalyzes the transfer of the enolpyruvyl moiety of phosphoenolpyruvate (PEP) to the 5-hydroxyl of shikimate-3-phosphate (S3P) to produce enolpyruvyl shikimate-3-phosphate and inorganic phosphate. The protein is 3-phosphoshikimate 1-carboxyvinyltransferase of Staphylococcus epidermidis (strain ATCC 35984 / DSM 28319 / BCRC 17069 / CCUG 31568 / BM 3577 / RP62A).